We begin with the raw amino-acid sequence, 338 residues long: Ketol-acid reductoisomerase (NADP(+)) (338 aa).

One can recognise a KARI N-terminal Rossmann domain in the interval 1–181 (MQIYYDKDAD…GGGRAGIIET (181 aa)). Residues 24 to 27 (YGSQ), Arg47, Ser50, Ser52, and 82 to 85 (DEHQ) each bind NADP(+). His107 is an active-site residue. Gly133 lines the NADP(+) pocket. Residues 182-327 (TFREETETDL…ARLRDMMPWI (146 aa)) enclose the KARI C-terminal knotted domain. The Mg(2+) site is built by Asp190, Glu194, Glu226, and Glu230. Ser251 serves as a coordination point for substrate.

The protein belongs to the ketol-acid reductoisomerase family. Mg(2+) serves as cofactor.

It carries out the reaction (2R)-2,3-dihydroxy-3-methylbutanoate + NADP(+) = (2S)-2-acetolactate + NADPH + H(+). It catalyses the reaction (2R,3R)-2,3-dihydroxy-3-methylpentanoate + NADP(+) = (S)-2-ethyl-2-hydroxy-3-oxobutanoate + NADPH + H(+). It participates in amino-acid biosynthesis; L-isoleucine biosynthesis; L-isoleucine from 2-oxobutanoate: step 2/4. The protein operates within amino-acid biosynthesis; L-valine biosynthesis; L-valine from pyruvate: step 2/4. In terms of biological role, involved in the biosynthesis of branched-chain amino acids (BCAA). Catalyzes an alkyl-migration followed by a ketol-acid reduction of (S)-2-acetolactate (S2AL) to yield (R)-2,3-dihydroxy-isovalerate. In the isomerase reaction, S2AL is rearranged via a Mg-dependent methyl migration to produce 3-hydroxy-3-methyl-2-ketobutyrate (HMKB). In the reductase reaction, this 2-ketoacid undergoes a metal-dependent reduction by NADPH to yield (R)-2,3-dihydroxy-isovalerate. The chain is Ketol-acid reductoisomerase (NADP(+)) from Methylococcus capsulatus (strain ATCC 33009 / NCIMB 11132 / Bath).